The sequence spans 260 residues: Phosphate import ATP-binding protein PstB 5 (260 aa).

The ABC transporter domain occupies 9-255 (IKVKDLSFYY…PLDSRTRDYV (247 aa)). Residue 41–48 (GPSGCGKS) coordinates ATP.

This sequence belongs to the ABC transporter superfamily. Phosphate importer (TC 3.A.1.7) family. The complex is composed of two ATP-binding proteins (PstB), two transmembrane proteins (PstC and PstA) and a solute-binding protein (PstS).

The protein resides in the cell inner membrane. The enzyme catalyses phosphate(out) + ATP + H2O = ADP + 2 phosphate(in) + H(+). Part of the ABC transporter complex PstSACB involved in phosphate import. Responsible for energy coupling to the transport system. The sequence is that of Phosphate import ATP-binding protein PstB 5 from Trichormus variabilis (strain ATCC 29413 / PCC 7937) (Anabaena variabilis).